A 570-amino-acid polypeptide reads, in one-letter code: Interleukin-1 receptor accessory protein (570 aa).

An N-terminal signal peptide occupies residues 1–20; it reads MTLLWCVVSLYFYGILQSDA. Ig-like C2-type domains follow at residues 21-128, 136-226, and 242-350; these read SERC…VAFP, SCFN…FHLT, and PPVI…VKQK. Residues 21–367 lie on the Extracellular side of the membrane; sequence SERCDDWGLD…VELACGFGAT (347 aa). Disulfide bonds link Cys-24-Cys-122, Cys-47-Cys-114, Cys-137-Cys-181, Cys-160-Cys-212, and Cys-266-Cys-332. N-linked (GlcNAc...) asparagine glycosylation occurs at Asn-57. The segment at 69 to 85 is essential for interaction with PTPRD; the sequence is IWYWTRQDRDLEEPINF. Residues Asn-107, Asn-111, and Asn-118 are each glycosylated (N-linked (GlcNAc...) asparagine). Asn-196, Asn-209, and Asn-299 each carry an N-linked (GlcNAc...) asparagine glycan. The chain crosses the membrane as a helical span at residues 368–388; it reads VLLVVILIVVYHVYWLEMVLF. Residues 389–570 lie on the Cytoplasmic side of the membrane; the sequence is YRAHFGTDET…GLSYSSLKNV (182 aa). The region spanning 403 to 546 is the TIR domain; the sequence is KEYDIYVSYA…RFWKQLQVAM (144 aa). Residue Glu-482 is part of the active site. The tract at residues 549–570 is disordered; it reads KKSPRRSSSDEQGLSYSSLKNV. Residue Ser-557 is modified to Phosphoserine. Polar residues predominate over residues 558 to 570; sequence DEQGLSYSSLKNV.

This sequence belongs to the interleukin-1 receptor family. The interleukin-36 receptor complex is a heterodimer of IL1RL2 and IL1RAP; the association is inhibited by IL36RN. The interleukin-1 receptor complex is a heterodimer of IL1R1 and IL1RAP. Associates with IL1R2 to form a non-signaling interleukin-1 receptor complex. Interacts with IL-33-bound IL1RL1 to form the minimal interleukin-33 signaling complex with a 1:1:1 stoichiometry. Interacts with KIT (independently of stimulation with KITLG/SCF). A mast cell-specific KITLG/SCF-induced interleukin-33 signaling complex contains IL1RL1, IL1RAP, KIT and MYD88. Interacts (via the first immunoglobilin domain) with PTPRD (via the third immunoglobilin domain); induces pre- and postsynaptic differentiation of neurons.

The protein localises to the cell membrane. It localises to the secreted. The enzyme catalyses NAD(+) + H2O = ADP-D-ribose + nicotinamide + H(+). Functionally, coreceptor for IL1RL2 in the IL-36 signaling system. Coreceptor with IL1R1 in the IL-1 signaling system. Associates with IL1R1 bound to IL1B to form the high affinity interleukin-1 receptor complex which mediates interleukin-1-dependent activation of NF-kappa-B and other pathways. Signaling involves the recruitment of adapter molecules such as TOLLIP, MYD88, and IRAK1 or IRAK2 via the respective TIR domains of the receptor/coreceptor subunits. Recruits TOLLIP to the signaling complex. Does not bind to interleukin-1 alone; binding of IL1RN to IL1R1, prevents its association with IL1R1 to form a signaling complex. The cellular response is modulated through a non-signaling association with the membrane IL1R2 decoy receptor. Coreceptor for IL1RL1 in the IL-33 signaling system. Can bidirectionally induce pre- and postsynaptic differentiation of neurons by trans-synaptically binding to PTPRD. May play a role in IL1B-mediated costimulation of IFNG production from T-helper 1 (Th1) cells. Associates with secreted ligand-bound IL1R2 and increases the affinity of secreted IL1R2 for IL1B; this complex formation may be the dominant mechanism for neutralization of IL1B by secreted/soluble receptors. Enhances the ability of secreted IL1R1 to inhibit IL-33 signaling. In Macaca mulatta (Rhesus macaque), this protein is Interleukin-1 receptor accessory protein (IL1RAP).